The primary structure comprises 514 residues: Exoglucanase 1 (514 aa).

Residues 1-17 (MYQKLALISAFLATARA) form the signal peptide. Residues 18 to 453 (QSACTLQAET…GSTGNSSGGN (436 aa)) are catalytic. 10 cysteine pairs are disulfide-bonded: Cys-21-Cys-89, Cys-36-Cys-42, Cys-67-Cys-88, Cys-78-Cys-84, Cys-155-Cys-414, Cys-189-Cys-227, Cys-193-Cys-226, Cys-247-Cys-273, Cys-255-Cys-260, and Cys-278-Cys-348. N-linked (GlcNAc...) asparagine glycans are attached at residues Asn-62 and Asn-81. Residue Glu-229 is the Nucleophile of the active site. Residue Glu-234 is the Proton donor of the active site. Asn-287 carries an N-linked (GlcNAc...) asparagine glycan. Disordered stretches follow at residues 401-427 (NETSSTPGAVRGSCSTSSGVPAQLESN) and 444-481 (GSTGNSSGGNPPGGNPPGTTTTRRPATSTGSSPGPTQT). Residues 454–478 (PPGGNPPGTTTTRRPATSTGSSPGP) form a linker region. Residues 460-479 (PGTTTTRRPATSTGSSPGPT) are compositionally biased toward low complexity. The CBM1 domain occupies 478–514 (PTQTHYGQCGGIGYSGPTVCASGSTCQVLNPYYSQCL). 2 disulfides stabilise this stretch: Cys-486–Cys-503 and Cys-497–Cys-513.

The protein belongs to the glycosyl hydrolase 7 (cellulase C) family.

The enzyme catalyses Hydrolysis of (1-&gt;4)-beta-D-glucosidic linkages in cellulose and cellotetraose, releasing cellobiose from the non-reducing ends of the chains.. Functionally, the biological conversion of cellulose to glucose generally requires three types of hydrolytic enzymes: (1) Endoglucanases which cut internal beta-1,4-glucosidic bonds; (2) Exocellobiohydrolases that cut the disaccharide cellobiose from the non-reducing end of the cellulose polymer chain; (3) Beta-1,4-glucosidases which hydrolyze the cellobiose and other short cello-oligosaccharides to glucose. The protein is Exoglucanase 1 (cbh1) of Hypocrea rufa (Trichoderma viride).